Reading from the N-terminus, the 859-residue chain is Envelope glycoprotein gp160 (859 aa).

Positions 1 to 24 (MERGRNQLLIAILLASACLIYCRQ) are cleaved as a signal peptide. Residues 25 to 680 (QYVTVFYGVP…LTSWISYIQY (656 aa)) lie on the Extracellular side of the membrane. An N-linked (GlcNAc...) asparagine; by host glycan is attached at asparagine 38. Cysteine 45 and cysteine 58 are disulfide-bonded. 22 N-linked (GlcNAc...) asparagine; by host glycosylation sites follow: asparagine 71, asparagine 115, asparagine 148, asparagine 163, asparagine 176, asparagine 188, asparagine 195, asparagine 205, asparagine 237, asparagine 247, asparagine 271, asparagine 277, asparagine 288, asparagine 299, asparagine 309, asparagine 343, asparagine 366, asparagine 398, asparagine 411, asparagine 448, asparagine 463, and asparagine 467. 5 cysteine pairs are disulfide-bonded: cysteine 102–cysteine 213, cysteine 109–cysteine 204, cysteine 114–cysteine 160, cysteine 226–cysteine 256, and cysteine 236–cysteine 248. Residues 114–159 (CNISTSDTTMIRTTTPSTAKEAPISDNSPCIRTNNCSGLEEEKIVK) form a V1 region. Positions 160–204 (CHFNMTGLERDKKKQYNETWYSSDVVCDNSTDQTTNETTCYMNHC) are V2. The tract at residues 304–337 (CRRPGNKTVVPITLMSGQRFHSRPIINKRPRQAW) is V3. Residues cysteine 304 and cysteine 338 are joined by a disulfide bond. Intrachain disulfides connect cysteine 390-cysteine 447 and cysteine 397-cysteine 420. A V4 region spans residues 397–420 (CNMTWFLNWVENKPNTTKRNYAPC). The interval 463–470 (NQTTNITF) is V5. Residues 513–533 (GAFVLGFLGFLTTAGVAMGTA) are fusion peptide. The immunosuppression stretch occupies residues 576–592 (LQARVTAIEKYLKDQAQ). N-linked (GlcNAc...) asparagine; by host glycosylation is found at asparagine 612, asparagine 621, and asparagine 637. A coiled-coil region spans residues 625–646 (QEWEQKVRYLEANISQSLEEAQ). Residues 658-679 (KLNNWDVFTNWFDLTSWISYIQ) are MPER; binding to GalCer. A helical membrane pass occupies residues 681 to 701 (GVYIVVGIIVLRIVIYVVQML). Topologically, residues 702 to 859 (SRLRKGYRPV…IRQGAELALL (158 aa)) are cytoplasmic. Residues 708 to 711 (YRPV) carry the YXXV motif; contains endocytosis signal motif. Residues 726-745 (KDPEQPASEETEEDVGGNGG) are disordered. Cysteine 774 carries the S-palmitoyl cysteine; by host lipid modification. Residues 858-859 (LL) carry the Di-leucine internalization motif motif.

The mature envelope protein (Env) consists of a homotrimer of non-covalently associated gp120-gp41 heterodimers. The resulting complex protrudes from the virus surface as a spike. There seems to be as few as 10 spikes on the average virion. Interacts with human CD4, CCR5 and CXCR4, to form a P4HB/PDI-CD4-CXCR4-gp120 complex. Gp120 also interacts with the C-type lectins CD209/DC-SIGN and CLEC4M/DC-SIGNR (collectively referred to as DC-SIGN(R)). Gp120 and gp41 interact with GalCer. In terms of assembly, the mature envelope protein (Env) consists of a homotrimer of non-covalently associated gp120-gp41 heterodimers. The resulting complex protrudes from the virus surface as a spike. There seems to be as few as 10 spikes on the average virion. Post-translationally, specific enzymatic cleavages in vivo yield mature proteins. Envelope glycoproteins are synthesized as an inactive precursor that is heavily N-glycosylated and processed likely by host cell furin in the Golgi to yield the mature SU and TM proteins. The cleavage site between SU and TM requires the minimal sequence [KR]-X-[KR]-R. In terms of processing, palmitoylation of the transmembrane protein and of Env polyprotein (prior to its proteolytic cleavage) is essential for their association with host cell membrane lipid rafts. Palmitoylation is therefore required for envelope trafficking to classical lipid rafts, but not for viral replication.

Its subcellular location is the virion membrane. The protein localises to the host cell membrane. It is found in the host endosome membrane. Its function is as follows. The surface protein gp120 (SU) attaches the virus to the host lymphoid cell by binding to the primary receptor CD4. This interaction induces a structural rearrangement creating a high affinity binding site for a chemokine coreceptor like CXCR4 and/or CCR5. This peculiar 2 stage receptor-interaction strategy allows gp120 to maintain the highly conserved coreceptor-binding site in a cryptic conformation, protected from neutralizing antibodies. Since CD4 also displays a binding site for the disulfide-isomerase P4HB/PDI, a P4HB/PDI-CD4-CXCR4-gp120 complex may form. In that complex, P4HB/PDI could reach and reduce gp120 disulfide bonds, causing major conformational changes in gp120. TXN, another PDI family member could also be involved in disulfide rearrangements in Env during fusion. These changes are transmitted to the transmembrane protein gp41 and are thought to activate its fusogenic potential by unmasking its fusion peptide. Functionally, the surface protein gp120 is a ligand for CD209/DC-SIGN and CLEC4M/DC-SIGNR, which are respectively found on dendritic cells (DCs), and on endothelial cells of liver sinusoids and lymph node sinuses. These interactions allow capture of viral particles at mucosal surfaces by these cells and subsequent transmission to permissive cells. DCs are professional antigen presenting cells, critical for host immunity by inducing specific immune responses against a broad variety of pathogens. They act as sentinels in various tissues where they take up antigen, process it, and present it to T-cells following migration to lymphoid organs. HIV subverts the migration properties of dendritic cells to gain access to CD4+ T-cells in lymph nodes. Virus transmission to permissive T-cells occurs either in trans (without DCs infection, through viral capture and transmission), or in cis (following DCs productive infection, through the usual CD4-gp120 interaction), thereby inducing a robust infection. In trans infection, bound virions remain infectious over days and it is proposed that they are not degraded, but protected in non-lysosomal acidic organelles within the DCs close to the cell membrane thus contributing to the viral infectious potential during DCs' migration from the periphery to the lymphoid tissues. On arrival at lymphoid tissues, intact virions recycle back to DCs' cell surface allowing virus transmission to CD4+ T-cells. Virion capture also seems to lead to MHC-II-restricted viral antigen presentation, and probably to the activation of HIV-specific CD4+ cells. In terms of biological role, the transmembrane protein gp41 (TM) acts as a class I viral fusion protein. Under the current model, the protein has at least 3 conformational states: pre-fusion native state, pre-hairpin intermediate state, and post-fusion hairpin state. During fusion of viral and target intracellular membranes, the coiled coil regions (heptad repeats) assume a trimer-of-hairpins structure, positioning the fusion peptide in close proximity to the C-terminal region of the ectodomain. The formation of this structure appears to drive apposition and subsequent fusion of viral and target cell membranes. Complete fusion occurs in host cell endosomes and is dynamin-dependent, however some lipid transfer might occur at the plasma membrane. The virus undergoes clathrin-dependent internalization long before endosomal fusion, thus minimizing the surface exposure of conserved viral epitopes during fusion and reducing the efficacy of inhibitors targeting these epitopes. Membranes fusion leads to delivery of the nucleocapsid into the cytoplasm. The envelope glycoprotein gp160 precursor down-modulates cell surface CD4 antigen by interacting with it in the endoplasmic reticulum and blocking its transport to the cell surface. Its function is as follows. The gp120-gp41 heterodimer seems to contribute to T-cell depletion during HIV-1 infection. The envelope glycoproteins expressed on the surface of infected cells induce apoptosis through an interaction with uninfected cells expressing the receptor (CD4) and the coreceptors CXCR4 or CCR5. This type of bystander killing may be obtained by at least three distinct mechanisms. First, the interaction between the 2 cells can induce cellular fusion followed by nuclear fusion within the syncytium. Syncytia are condemned to die from apoptosis. Second, the 2 interacting cells may not fuse entirely and simply exchange plasma membrane lipids, after a sort of hemifusion process, followed by rapid death. Third, it is possible that virus-infected cells, on the point of undergoing apoptosis, fuse with CD4-expressing cells, in which case apoptosis is rapidly transmitted from one cell to the other and thus occurs in a sort of contagious fashion. Functionally, the gp120-gp41 heterodimer allows rapid transcytosis of the virus through CD4 negative cells such as simple epithelial monolayers of the intestinal, rectal and endocervical epithelial barriers. Both gp120 and gp41 specifically recognize glycosphingolipids galactosyl-ceramide (GalCer) or 3' sulfo-galactosyl-ceramide (GalS) present in the lipid rafts structures of epithelial cells. Binding to these alternative receptors allows the rapid transcytosis of the virus through the epithelial cells. This transcytotic vesicle-mediated transport of virions from the apical side to the basolateral side of the epithelial cells does not involve infection of the cells themselves. This is Envelope glycoprotein gp160 (env) from Human immunodeficiency virus type 2 subtype A (isolate CAM2) (HIV-2).